Consider the following 403-residue polypeptide: Phosphoglycerate kinase (403 aa).

Substrate is bound by residues 21-23 (DFN), Arg-37, 60-63 (HLGR), Arg-125, and Arg-158. ATP is bound by residues Lys-209, Glu-332, and 359–362 (GGDS).

It belongs to the phosphoglycerate kinase family. Monomer.

It localises to the cytoplasm. The catalysed reaction is (2R)-3-phosphoglycerate + ATP = (2R)-3-phospho-glyceroyl phosphate + ADP. It functions in the pathway carbohydrate degradation; glycolysis; pyruvate from D-glyceraldehyde 3-phosphate: step 2/5. In Koribacter versatilis (strain Ellin345), this protein is Phosphoglycerate kinase.